The sequence spans 197 residues: Cytochrome c biogenesis ATP-binding export protein CcmA (197 aa).

Positions 1 to 196 (MSMLSLHQLQ…VIKSAQILQL (196 aa)) constitute an ABC transporter domain. Residue 35–42 (GANGSGKS) coordinates ATP.

It belongs to the ABC transporter superfamily. CcmA exporter (TC 3.A.1.107) family. The complex is composed of two ATP-binding proteins (CcmA) and two transmembrane proteins (CcmB).

Its subcellular location is the cell inner membrane. It carries out the reaction heme b(in) + ATP + H2O = heme b(out) + ADP + phosphate + H(+). Part of the ABC transporter complex CcmAB involved in the biogenesis of c-type cytochromes; once thought to export heme, this seems not to be the case, but its exact role is uncertain. Responsible for energy coupling to the transport system. This Rickettsia typhi (strain ATCC VR-144 / Wilmington) protein is Cytochrome c biogenesis ATP-binding export protein CcmA.